Consider the following 103-residue polypeptide: Large ribosomal subunit protein bL21 (103 aa).

It belongs to the bacterial ribosomal protein bL21 family. As to quaternary structure, part of the 50S ribosomal subunit. Contacts protein L20.

In terms of biological role, this protein binds to 23S rRNA in the presence of protein L20. The chain is Large ribosomal subunit protein bL21 from Acinetobacter baumannii (strain AB307-0294).